Here is a 124-residue protein sequence, read N- to C-terminus: MFAVIKTGGKQYRVAANDVITIEKLDGAAGDKIEFTEILMVGAGADATIGAPFVEGAVVSAEVVDHGRAKKVIAFKKRRRQNSKRTRGHRQHHTIVRILDIAAAGGKAKKASKKAEAAAEEAAN.

Belongs to the bacterial ribosomal protein bL21 family. Part of the 50S ribosomal subunit. Contacts protein L20.

Functionally, this protein binds to 23S rRNA in the presence of protein L20. This Sinorhizobium medicae (strain WSM419) (Ensifer medicae) protein is Large ribosomal subunit protein bL21.